Reading from the N-terminus, the 333-residue chain is Photosystem II assembly lipoprotein Ycf48 (333 aa).

The signal sequence occupies residues 1–23 (MKRLLNSATQLLLVLVLGISLSG). Cys24 carries the N-palmitoyl cysteine lipid modification. Residue Cys24 is the site of S-diacylglycerol cysteine attachment.

It belongs to the Ycf48 family. Part of early PSII assembly complexes which includes D1 (psbA) and PsbI; not found in mature PSII. Binds to the lumenal side of PSII complexes. Interacts with YidC.

It is found in the cellular thylakoid membrane. A factor required for optimal assembly of photosystem II (PSII), acting in the early stages of PSII assembly. Also plays a role in replacement of photodamaged D1 (psbA). Assists YidC in synthesis of chlorophyll-binding proteins. This chain is Photosystem II assembly lipoprotein Ycf48, found in Synechococcus sp. (strain CC9605).